The following is a 270-amino-acid chain: uncharacterized protein (270 aa).

The protein resides in the virion. This is an uncharacterized protein from Acanthamoeba polyphaga (Amoeba).